A 105-amino-acid chain; its full sequence is Large ribosomal subunit protein eL36 (105 aa).

The protein belongs to the eukaryotic ribosomal protein eL36 family. As to quaternary structure, component of the large ribosomal subunit.

The protein resides in the cytoplasm. The protein localises to the cytosol. Component of the large ribosomal subunit. The ribosome is a large ribonucleoprotein complex responsible for the synthesis of proteins in the cell. This chain is Large ribosomal subunit protein eL36 (rpl36), found in Danio rerio (Zebrafish).